The following is a 272-amino-acid chain: Tryptophan synthase alpha chain (272 aa).

Residues Glu49 and Asp60 each act as proton acceptor in the active site.

The protein belongs to the TrpA family. Tetramer of two alpha and two beta chains.

It catalyses the reaction (1S,2R)-1-C-(indol-3-yl)glycerol 3-phosphate + L-serine = D-glyceraldehyde 3-phosphate + L-tryptophan + H2O. It participates in amino-acid biosynthesis; L-tryptophan biosynthesis; L-tryptophan from chorismate: step 5/5. In terms of biological role, the alpha subunit is responsible for the aldol cleavage of indoleglycerol phosphate to indole and glyceraldehyde 3-phosphate. This Polaromonas naphthalenivorans (strain CJ2) protein is Tryptophan synthase alpha chain.